Here is a 737-residue protein sequence, read N- to C-terminus: Elongation factor 2 (737 aa).

In terms of domain architecture, tr-type G spans 18–262; it reads TRVRNIGIIA…TVIKFVPNPR (245 aa). GTP-binding positions include 27-34, 93-97, and 147-150; these read AHVDHGKT, DTPGH, and NKVD. Position 604 is a diphthamide (H604).

It belongs to the TRAFAC class translation factor GTPase superfamily. Classic translation factor GTPase family. EF-G/EF-2 subfamily.

The protein localises to the cytoplasm. Its function is as follows. Catalyzes the GTP-dependent ribosomal translocation step during translation elongation. During this step, the ribosome changes from the pre-translocational (PRE) to the post-translocational (POST) state as the newly formed A-site-bound peptidyl-tRNA and P-site-bound deacylated tRNA move to the P and E sites, respectively. Catalyzes the coordinated movement of the two tRNA molecules, the mRNA and conformational changes in the ribosome. The protein is Elongation factor 2 (fusA) of Sulfurisphaera tokodaii (strain DSM 16993 / JCM 10545 / NBRC 100140 / 7) (Sulfolobus tokodaii).